A 344-amino-acid chain; its full sequence is Gibberellin receptor GID1C (344 aa).

Position 2 is an N-acetylalanine (Ala2). The Involved in the stabilization of the negatively charged intermediate by the formation of the oxyanion hole signature appears at 111 to 113 (HGG). Gibberellin A4-binding positions include 113–114 (GS), Tyr125, and Ser189. Positions 114, 125, 189, and 236 each coordinate gibberellin A3. The active site involves Ser189. Residue Asp287 is part of the active site. A gibberellin A4-binding site is contributed by Gly318. Residue Gly318 coordinates gibberellin A3.

This sequence belongs to the 'GDXG' lipolytic enzyme family. In terms of assembly, interacts with the DELLA proteins GAI, RGA, RGL1, RGL2 and RGL3 in a GA-dependent manner. Widely expressed.

It localises to the nucleus. Functionally, functions as a soluble gibberellin (GA) receptor. GA is an essential hormone that regulates growth and development in plants. Binds with high affinity the biologically active gibberellin GA4, but has no affinity for the biologically inactive GAs. In response to GA, interacts with specific DELLA proteins, known as repressors of GA-induced growth, and targets them for degradation via proteasome. Seems to be required for GA signaling that controls root growth, seed germination and stem elongation. Partially redundant with GID1A and GID1B. This chain is Gibberellin receptor GID1C (GID1C), found in Arabidopsis thaliana (Mouse-ear cress).